Here is a 361-residue protein sequence, read N- to C-terminus: Thymidine kinase (361 aa).

An ATP-binding site is contributed by 17–24 (GPHGVGKS). Catalysis depends on Glu-46, which acts as the Proton acceptor. Tyr-64 and Gln-88 together coordinate substrate. Arg-184 contacts ATP. Arg-190 contacts substrate.

It belongs to the herpesviridae thymidine kinase family. In terms of assembly, homodimer.

The catalysed reaction is thymidine + ATP = dTMP + ADP + H(+). Its function is as follows. Catalyzes the transfer of the gamma-phospho group of ATP to thymidine to generate dTMP in the salvage pathway of pyrimidine synthesis. The dTMP serves as a substrate for DNA polymerase during viral DNA replication. Allows the virus to be reactivated and to grow in non-proliferative cells lacking a high concentration of phosphorylated nucleic acid precursors. The protein is Thymidine kinase of Saimiriine herpesvirus 1 (strain MV-5-4-PSL) (SaHV-1).